The following is a 199-amino-acid chain: 5'-deoxynucleotidase HDDC2 (199 aa).

The residue at position 2 (alanine 2) is an N-acetylalanine. The residue at position 5 (serine 5) is a Phosphoserine. An HD domain is found at 41–143 (VSDHMYRMAV…VKQLDQCEMI (103 aa)). A divalent metal cation-binding residues include histidine 44, histidine 72, aspartate 73, glutamate 76, aspartate 81, isoleucine 82, and aspartate 138. At serine 199 the chain carries Phosphoserine.

Belongs to the HDDC2 family. In terms of assembly, homodimer. Requires Mn(2+) as cofactor. The cofactor is Co(2+). It depends on Mg(2+) as a cofactor.

It carries out the reaction a 2'-deoxyribonucleoside 5'-phosphate + H2O = a 2'-deoxyribonucleoside + phosphate. Catalyzes the dephosphorylation of the nucleoside 5'-monophosphates deoxyadenosine monophosphate (dAMP), deoxycytidine monophosphate (dCMP), deoxyguanosine monophosphate (dGMP) and deoxythymidine monophosphate (dTMP). This is 5'-deoxynucleotidase HDDC2 (Hddc2) from Mus musculus (Mouse).